Here is a 164-residue protein sequence, read N- to C-terminus: Phosphopantetheine adenylyltransferase (164 aa).

A substrate-binding site is contributed by serine 9. ATP contacts are provided by residues 9–10 and histidine 17; that span reads SF. 3 residues coordinate substrate: lysine 41, leucine 73, and lysine 87. Residues 88 to 90, glutamate 98, and 123 to 129 each bind ATP; these read GLR and YSYISSS.

This sequence belongs to the bacterial CoaD family. Homohexamer. It depends on Mg(2+) as a cofactor.

The protein resides in the cytoplasm. It catalyses the reaction (R)-4'-phosphopantetheine + ATP + H(+) = 3'-dephospho-CoA + diphosphate. It functions in the pathway cofactor biosynthesis; coenzyme A biosynthesis; CoA from (R)-pantothenate: step 4/5. Its function is as follows. Reversibly transfers an adenylyl group from ATP to 4'-phosphopantetheine, yielding dephospho-CoA (dPCoA) and pyrophosphate. This chain is Phosphopantetheine adenylyltransferase, found in Clostridium perfringens (strain SM101 / Type A).